Consider the following 227-residue polypeptide: UPF0758 protein Pcar_0065 (227 aa).

Residues 105 to 227 (RYTSPQAVFA…YVSLADRGVL (123 aa)) form the MPN domain. Positions 176, 178, and 189 each coordinate Zn(2+). The JAMM motif motif lies at 176–189 (HNHPSGDPSPSRED).

The protein belongs to the UPF0758 family.

This is UPF0758 protein Pcar_0065 from Syntrophotalea carbinolica (strain DSM 2380 / NBRC 103641 / GraBd1) (Pelobacter carbinolicus).